The sequence spans 634 residues: AAl-toxin cluster-specific transcription factor ALT13 (634 aa).

The zn(2)-C6 fungal-type DNA-binding region spans 30-56; sequence CENCKRRKVRCSGANPCEQCLKVNVHC. The disordered stretch occupies residues 66-89; it reads RRSVPNSGADKNNQQGDTDRHNGA. A compositionally biased stretch (polar residues) spans 69–81; sequence VPNSGADKNNQQG.

The protein resides in the nucleus. Transcription factor that regulates the expression of the gene cluster that mediates the biosynthesis of AAL-toxins, sphinganine-analog mycotoxins responsible for Alternaria stem canker on tomato by the tomato pathotype. The polypeptide is AAl-toxin cluster-specific transcription factor ALT13 (Alternaria alternata (Alternaria rot fungus)).